Consider the following 174-residue polypeptide: Crossover junction endodeoxyribonuclease RuvC (174 aa).

Active-site residues include Asp8, Glu67, and Asp139. Residues Asp8, Glu67, and Asp139 each coordinate Mg(2+).

This sequence belongs to the RuvC family. As to quaternary structure, homodimer which binds Holliday junction (HJ) DNA. The HJ becomes 2-fold symmetrical on binding to RuvC with unstacked arms; it has a different conformation from HJ DNA in complex with RuvA. In the full resolvosome a probable DNA-RuvA(4)-RuvB(12)-RuvC(2) complex forms which resolves the HJ. Requires Mg(2+) as cofactor.

It is found in the cytoplasm. The catalysed reaction is Endonucleolytic cleavage at a junction such as a reciprocal single-stranded crossover between two homologous DNA duplexes (Holliday junction).. In terms of biological role, the RuvA-RuvB-RuvC complex processes Holliday junction (HJ) DNA during genetic recombination and DNA repair. Endonuclease that resolves HJ intermediates. Cleaves cruciform DNA by making single-stranded nicks across the HJ at symmetrical positions within the homologous arms, yielding a 5'-phosphate and a 3'-hydroxyl group; requires a central core of homology in the junction. The consensus cleavage sequence is 5'-(A/T)TT(C/G)-3'. Cleavage occurs on the 3'-side of the TT dinucleotide at the point of strand exchange. HJ branch migration catalyzed by RuvA-RuvB allows RuvC to scan DNA until it finds its consensus sequence, where it cleaves and resolves the cruciform DNA. In Pseudomonas fluorescens (strain SBW25), this protein is Crossover junction endodeoxyribonuclease RuvC.